Here is a 109-residue protein sequence, read N- to C-terminus: Small ribosomal subunit protein bS6 (109 aa).

This sequence belongs to the bacterial ribosomal protein bS6 family.

In terms of biological role, binds together with bS18 to 16S ribosomal RNA. The chain is Small ribosomal subunit protein bS6 from Dehalococcoides mccartyi (strain ATCC BAA-2266 / KCTC 15142 / 195) (Dehalococcoides ethenogenes (strain 195)).